Here is a 104-residue protein sequence, read N- to C-terminus: Pyrimidine/purine nucleoside phosphorylase (104 aa).

It belongs to the nucleoside phosphorylase PpnP family.

It carries out the reaction a purine D-ribonucleoside + phosphate = a purine nucleobase + alpha-D-ribose 1-phosphate. The enzyme catalyses adenosine + phosphate = alpha-D-ribose 1-phosphate + adenine. It catalyses the reaction cytidine + phosphate = cytosine + alpha-D-ribose 1-phosphate. The catalysed reaction is guanosine + phosphate = alpha-D-ribose 1-phosphate + guanine. It carries out the reaction inosine + phosphate = alpha-D-ribose 1-phosphate + hypoxanthine. The enzyme catalyses thymidine + phosphate = 2-deoxy-alpha-D-ribose 1-phosphate + thymine. It catalyses the reaction uridine + phosphate = alpha-D-ribose 1-phosphate + uracil. The catalysed reaction is xanthosine + phosphate = alpha-D-ribose 1-phosphate + xanthine. Catalyzes the phosphorolysis of diverse nucleosides, yielding D-ribose 1-phosphate and the respective free bases. Can use uridine, adenosine, guanosine, cytidine, thymidine, inosine and xanthosine as substrates. Also catalyzes the reverse reactions. This Colwellia psychrerythraea (strain 34H / ATCC BAA-681) (Vibrio psychroerythus) protein is Pyrimidine/purine nucleoside phosphorylase.